Consider the following 383-residue polypeptide: Succinyl-diaminopimelate desuccinylase (383 aa).

Residue His-79 coordinates Zn(2+). The active site involves Asp-81. A Zn(2+)-binding site is contributed by Asp-110. The active-site Proton acceptor is Glu-141. Zn(2+)-binding residues include Glu-142, Glu-170, and His-355.

This sequence belongs to the peptidase M20A family. DapE subfamily. Homodimer. The cofactor is Zn(2+). Requires Co(2+) as cofactor.

The enzyme catalyses N-succinyl-(2S,6S)-2,6-diaminopimelate + H2O = (2S,6S)-2,6-diaminopimelate + succinate. Its pathway is amino-acid biosynthesis; L-lysine biosynthesis via DAP pathway; LL-2,6-diaminopimelate from (S)-tetrahydrodipicolinate (succinylase route): step 3/3. Functionally, catalyzes the hydrolysis of N-succinyl-L,L-diaminopimelic acid (SDAP), forming succinate and LL-2,6-diaminopimelate (DAP), an intermediate involved in the bacterial biosynthesis of lysine and meso-diaminopimelic acid, an essential component of bacterial cell walls. The chain is Succinyl-diaminopimelate desuccinylase from Helicobacter pylori (strain HPAG1).